Reading from the N-terminus, the 875-residue chain is Alanine--tRNA ligase (875 aa).

Zn(2+)-binding residues include histidine 564, histidine 568, cysteine 666, and histidine 670.

This sequence belongs to the class-II aminoacyl-tRNA synthetase family. In terms of assembly, homotetramer. Requires Zn(2+) as cofactor.

It is found in the cytoplasm. The catalysed reaction is tRNA(Ala) + L-alanine + ATP = L-alanyl-tRNA(Ala) + AMP + diphosphate. Catalyzes the attachment of alanine to tRNA(Ala) in a two-step reaction: alanine is first activated by ATP to form Ala-AMP and then transferred to the acceptor end of tRNA(Ala). Also edits incorrectly charged Ser-tRNA(Ala) and Gly-tRNA(Ala) via its editing domain. The chain is Alanine--tRNA ligase from Yersinia pestis bv. Antiqua (strain Angola).